Reading from the N-terminus, the 107-residue chain is Nucleoid-associated protein A1G_07310 (107 aa).

It belongs to the YbaB/EbfC family. Homodimer.

It localises to the cytoplasm. It is found in the nucleoid. Its function is as follows. Binds to DNA and alters its conformation. May be involved in regulation of gene expression, nucleoid organization and DNA protection. This is Nucleoid-associated protein A1G_07310 from Rickettsia rickettsii (strain Sheila Smith).